A 154-amino-acid polypeptide reads, in one-letter code: Crossover junction endodeoxyribonuclease RuvC (154 aa).

Catalysis depends on residues Asp-7, Glu-67, and Asp-139. The Mg(2+) site is built by Asp-7, Glu-67, and Asp-139.

It belongs to the RuvC family. As to quaternary structure, homodimer which binds Holliday junction (HJ) DNA. The HJ becomes 2-fold symmetrical on binding to RuvC with unstacked arms; it has a different conformation from HJ DNA in complex with RuvA. In the full resolvosome a probable DNA-RuvA(4)-RuvB(12)-RuvC(2) complex forms which resolves the HJ. The cofactor is Mg(2+).

Its subcellular location is the cytoplasm. The catalysed reaction is Endonucleolytic cleavage at a junction such as a reciprocal single-stranded crossover between two homologous DNA duplexes (Holliday junction).. Its function is as follows. The RuvA-RuvB-RuvC complex processes Holliday junction (HJ) DNA during genetic recombination and DNA repair. Endonuclease that resolves HJ intermediates. Cleaves cruciform DNA by making single-stranded nicks across the HJ at symmetrical positions within the homologous arms, yielding a 5'-phosphate and a 3'-hydroxyl group; requires a central core of homology in the junction. The consensus cleavage sequence is 5'-(A/T)TT(C/G)-3'. Cleavage occurs on the 3'-side of the TT dinucleotide at the point of strand exchange. HJ branch migration catalyzed by RuvA-RuvB allows RuvC to scan DNA until it finds its consensus sequence, where it cleaves and resolves the cruciform DNA. The protein is Crossover junction endodeoxyribonuclease RuvC of Prochlorococcus marinus (strain NATL2A).